The chain runs to 433 residues: Phosphomethylpyrimidine synthase 1 (433 aa).

Substrate-binding positions include Asn-66, Met-94, Tyr-123, His-162, 184–186 (SRG), 225–228 (DALR), and Glu-264. His-268 is a Zn(2+) binding site. A substrate-binding site is contributed by Tyr-291. His-332 lines the Zn(2+) pocket. Positions 408, 411, and 415 each coordinate [4Fe-4S] cluster.

This sequence belongs to the ThiC family. [4Fe-4S] cluster is required as a cofactor.

It carries out the reaction 5-amino-1-(5-phospho-beta-D-ribosyl)imidazole + S-adenosyl-L-methionine = 4-amino-2-methyl-5-(phosphooxymethyl)pyrimidine + CO + 5'-deoxyadenosine + formate + L-methionine + 3 H(+). It functions in the pathway cofactor biosynthesis; thiamine diphosphate biosynthesis. Its function is as follows. Catalyzes the synthesis of the hydroxymethylpyrimidine phosphate (HMP-P) moiety of thiamine from aminoimidazole ribotide (AIR) in a radical S-adenosyl-L-methionine (SAM)-dependent reaction. The sequence is that of Phosphomethylpyrimidine synthase 1 from Saccharolobus solfataricus (strain ATCC 35092 / DSM 1617 / JCM 11322 / P2) (Sulfolobus solfataricus).